The chain runs to 89 residues: Small ribosomal subunit protein uS15 (89 aa).

This sequence belongs to the universal ribosomal protein uS15 family. Part of the 30S ribosomal subunit. Forms a bridge to the 50S subunit in the 70S ribosome, contacting the 23S rRNA.

In terms of biological role, one of the primary rRNA binding proteins, it binds directly to 16S rRNA where it helps nucleate assembly of the platform of the 30S subunit by binding and bridging several RNA helices of the 16S rRNA. Functionally, forms an intersubunit bridge (bridge B4) with the 23S rRNA of the 50S subunit in the ribosome. This Salmonella schwarzengrund (strain CVM19633) protein is Small ribosomal subunit protein uS15.